Reading from the N-terminus, the 276-residue chain is Probable endonuclease 4 (276 aa).

9 residues coordinate Zn(2+): histidine 65, histidine 105, glutamate 141, aspartate 175, histidine 178, histidine 210, aspartate 223, histidine 225, and glutamate 255.

This sequence belongs to the AP endonuclease 2 family. The cofactor is Zn(2+).

It catalyses the reaction Endonucleolytic cleavage to 5'-phosphooligonucleotide end-products.. In terms of biological role, endonuclease IV plays a role in DNA repair. It cleaves phosphodiester bonds at apurinic or apyrimidinic (AP) sites, generating a 3'-hydroxyl group and a 5'-terminal sugar phosphate. This Symbiobacterium thermophilum (strain DSM 24528 / JCM 14929 / IAM 14863 / T) protein is Probable endonuclease 4.